The primary structure comprises 215 residues: BAG family molecular chaperone regulator 5, mitochondrial (215 aa).

The transit peptide at 1-14 (MKRSRKFSSSTTTT) directs the protein to the mitochondrion. The IQ domain maps to 50 to 79 (ATAAAARIQSGYRSYRIRNLYKKISSINRE). The BAG domain maps to 72 to 149 (KISSINREAN…GMQEILDSIS (78 aa)).

As to quaternary structure, binds to the ATPase domain of HSP70/HSC70 chaperones. Interacts with HSP70-1.

The protein localises to the mitochondrion. Functionally, co-chaperone that regulates diverse cellular pathways, such as programmed cell death and stress responses. The chain is BAG family molecular chaperone regulator 5, mitochondrial (BAG5) from Arabidopsis thaliana (Mouse-ear cress).